A 348-amino-acid chain; its full sequence is NAC domain-containing protein 101 (348 aa).

The NAC domain occupies 7–156 (IPPGYRFHPT…GWVVCRAFKK (150 aa)). The DNA-binding element occupies 107-162 (VGMRKTLVFYKGRAPNGQKSDWIMHEYRLETDENGPPHEEGWVVCRAFKKKLTTMN). The segment at 325-348 (MVSMNASSSSSPCSFYSWAQNTHT) is disordered. The span at 327-341 (SMNASSSSSPCSFYS) shows a compositional bias: low complexity.

It belongs to the plant vascular related NAC-domain protein family. Homodimer. Expressed in root inner metaxylem vessels and in hypocotyl vessels. Present in root developing xylems. Accumulates in the xylem but not in interfascicular fibers or pith cells in inflorescence stems. Absent from secondary xylem in roots.

It is found in the nucleus. Transcription activator that binds to the secondary wall NAC binding element (SNBE), 5'-(T/A)NN(C/T)(T/C/G)TNNNNNNNA(A/C)GN(A/C/T)(A/T)-3', and to the tracheary elements (TE) specific regulating cis-element (TERE), 5'-CTTNAAAGCNA-3', in the promoter of target genes (e.g. genes involved in secondary wall biosynthesis, cell wall modification such as xylan accumulation, and programmed cell death). Involved in xylem formation in roots and shoots, especially regulating metaxylem vessel differentiation by promoting immature xylem vessel-specific genes expression, especially genes regulating programmed cell death (PCD) and secondary wall formation in tracheary elements (TE). Can activate MYB25, MYB46, MYB58, MYB63, MYB83, MYB103, CESA4, LBD15, LBD30, ERF115, XCP1, XCP2, NAC010/SND3, KNAT7, ASL19 and ASL20 expression. The polypeptide is NAC domain-containing protein 101 (Arabidopsis thaliana (Mouse-ear cress)).